The following is a 313-amino-acid chain: Ribosomal RNA small subunit methyltransferase H (313 aa).

Residues 35-37 (GGH), Asp55, Phe79, Asp101, and Gln108 contribute to the S-adenosyl-L-methionine site.

This sequence belongs to the methyltransferase superfamily. RsmH family.

The protein resides in the cytoplasm. It catalyses the reaction cytidine(1402) in 16S rRNA + S-adenosyl-L-methionine = N(4)-methylcytidine(1402) in 16S rRNA + S-adenosyl-L-homocysteine + H(+). In terms of biological role, specifically methylates the N4 position of cytidine in position 1402 (C1402) of 16S rRNA. The sequence is that of Ribosomal RNA small subunit methyltransferase H from Enterobacter sp. (strain 638).